We begin with the raw amino-acid sequence, 171 residues long: Plastocyanin minor isoform, chloroplastic (171 aa).

A Plastocyanin-like domain is found at 73–171 (MEVLLGSDDG…AGMVGKLTVK (99 aa)). Residues H109, C156, H159, and M164 each coordinate Cu cation.

Belongs to the plastocyanin family. Cu(2+) is required as a cofactor.

The protein localises to the plastid. Its subcellular location is the chloroplast thylakoid membrane. Participates in electron transfer between P700 and the cytochrome b6-f complex in photosystem I. Seems to be a minor plastocyanin in Arabidopsis. In Arabidopsis thaliana (Mouse-ear cress), this protein is Plastocyanin minor isoform, chloroplastic (PETE).